Reading from the N-terminus, the 296-residue chain is Glycine--tRNA ligase alpha subunit (296 aa).

Belongs to the class-II aminoacyl-tRNA synthetase family. In terms of assembly, tetramer of two alpha and two beta subunits.

The protein resides in the cytoplasm. It carries out the reaction tRNA(Gly) + glycine + ATP = glycyl-tRNA(Gly) + AMP + diphosphate. The polypeptide is Glycine--tRNA ligase alpha subunit (Maricaulis maris (strain MCS10) (Caulobacter maris)).